We begin with the raw amino-acid sequence, 394 residues long: E3 ubiquitin-protein ligase RNF149 (394 aa).

The first 31 residues, 1 to 31 (MAARRRPAAGVGARDALAVLALALCTPGVGG), serve as a signal peptide directing secretion. 2 N-linked (GlcNAc...) asparagine glycosylation sites follow: Asn51 and Asn141. The region spanning 66–171 (SSLREERQGL…PKGREIFDLV (106 aa)) is the PA domain. The helical transmembrane segment at 197 to 217 (VVFVAIAFITMMIISLAWLIF) threads the bilayer. The RING-type; atypical zinc finger occupies 265 to 306 (CAVCIENFKVKDVIRILPCKHIFHRICIDPWLLDHRTCPMCK). Positions 321–394 (DTQELPTPEA…SEPQHGGSIC (74 aa)) are disordered. Thr327 carries the post-translational modification Phosphothreonine. N-linked (GlcNAc...) asparagine glycosylation is present at Asn339. Phosphoserine occurs at positions 341 and 344. Residues 352–362 (SNLPSSSSSES) show a composition bias toward low complexity.

The protein resides in the membrane. The catalysed reaction is S-ubiquitinyl-[E2 ubiquitin-conjugating enzyme]-L-cysteine + [acceptor protein]-L-lysine = [E2 ubiquitin-conjugating enzyme]-L-cysteine + N(6)-ubiquitinyl-[acceptor protein]-L-lysine.. It participates in protein modification; protein ubiquitination. E3 ubiquitin-protein ligase. Ubiquitinates BRAF, inducing its proteasomal degradation. This chain is E3 ubiquitin-protein ligase RNF149 (Rnf149), found in Mus musculus (Mouse).